Consider the following 168-residue polypeptide: Transcription antitermination protein NusB (168 aa).

The protein belongs to the NusB family.

Its function is as follows. Involved in transcription antitermination. Required for transcription of ribosomal RNA (rRNA) genes. Binds specifically to the boxA antiterminator sequence of the ribosomal RNA (rrn) operons. The sequence is that of Transcription antitermination protein NusB from Chlamydia trachomatis serovar A (strain ATCC VR-571B / DSM 19440 / HAR-13).